The chain runs to 948 residues: Isoleucine--tRNA ligase (948 aa).

A 'HIGH' region motif is present at residues 58–68 (PYANGDIHIGH). Glu-566 lines the L-isoleucyl-5'-AMP pocket. The 'KMSKS' region signature appears at 607–611 (KMSKS). ATP is bound at residue Lys-610. Residues Cys-911, Cys-914, Cys-931, and Cys-934 each coordinate Zn(2+).

Belongs to the class-I aminoacyl-tRNA synthetase family. IleS type 1 subfamily. In terms of assembly, monomer. The cofactor is Zn(2+).

Its subcellular location is the cytoplasm. It catalyses the reaction tRNA(Ile) + L-isoleucine + ATP = L-isoleucyl-tRNA(Ile) + AMP + diphosphate. Its function is as follows. Catalyzes the attachment of isoleucine to tRNA(Ile). As IleRS can inadvertently accommodate and process structurally similar amino acids such as valine, to avoid such errors it has two additional distinct tRNA(Ile)-dependent editing activities. One activity is designated as 'pretransfer' editing and involves the hydrolysis of activated Val-AMP. The other activity is designated 'posttransfer' editing and involves deacylation of mischarged Val-tRNA(Ile). The chain is Isoleucine--tRNA ligase from Vibrio vulnificus (strain CMCP6).